The following is a 224-amino-acid chain: Urease accessory protein UreF (224 aa).

It belongs to the UreF family. UreD, UreF and UreG form a complex that acts as a GTP-hydrolysis-dependent molecular chaperone, activating the urease apoprotein by helping to assemble the nickel containing metallocenter of UreC. The UreE protein probably delivers the nickel.

It is found in the cytoplasm. Functionally, required for maturation of urease via the functional incorporation of the urease nickel metallocenter. The chain is Urease accessory protein UreF from Nitrosococcus oceani (strain ATCC 19707 / BCRC 17464 / JCM 30415 / NCIMB 11848 / C-107).